Reading from the N-terminus, the 513-residue chain is Glycine/sarcosine/betaine reductase complex component C subunit beta (513 aa).

As to quaternary structure, heterooctamer of four alpha and four beta subunits. Component of the glycine, sarcosine and betaine reductase complexes, together with proteins A and B.

It carries out the reaction acetyl phosphate + [thioredoxin]-disulfide + NH4(+) + H2O = [thioredoxin]-dithiol + glycine + phosphate + H(+). The enzyme catalyses acetyl phosphate + methylamine + [thioredoxin]-disulfide + H2O = sarcosine + [thioredoxin]-dithiol + phosphate + H(+). It catalyses the reaction acetyl phosphate + trimethylamine + [thioredoxin]-disulfide + H2O = glycine betaine + [thioredoxin]-dithiol + phosphate + H(+). In the first step of glycine, betaine and sarcosine reductases, the substrate is bound to component PB via a Schiff base intermediate. Then the PB-activated substrate is nucleophilically attacked by the selenol anion of component PA to transform it to a carboxymethylated selenoether and the respective amine. By action of component PC, acetyl phosphate is formed, leaving component PA in its oxidized state. Finally component PA becomes reduced by the thioredoxin system to start a new catalytic cycle of reductive deamination. The polypeptide is Glycine/sarcosine/betaine reductase complex component C subunit beta (grdC) (Peptoclostridium acidaminophilum (Eubacterium acidaminophilum)).